The primary structure comprises 466 residues: 3-isopropylmalate dehydratase large subunit (466 aa).

[4Fe-4S] cluster contacts are provided by cysteine 347, cysteine 407, and cysteine 410.

This sequence belongs to the aconitase/IPM isomerase family. LeuC type 1 subfamily. As to quaternary structure, heterodimer of LeuC and LeuD. The cofactor is [4Fe-4S] cluster.

The enzyme catalyses (2R,3S)-3-isopropylmalate = (2S)-2-isopropylmalate. The protein operates within amino-acid biosynthesis; L-leucine biosynthesis; L-leucine from 3-methyl-2-oxobutanoate: step 2/4. Catalyzes the isomerization between 2-isopropylmalate and 3-isopropylmalate, via the formation of 2-isopropylmaleate. This is 3-isopropylmalate dehydratase large subunit from Escherichia coli O157:H7.